The sequence spans 363 residues: Chorismate synthase (363 aa).

NADP(+) is bound by residues arginine 48 and arginine 54. FMN contacts are provided by residues 125-127, 238-239, glycine 278, 293-297, and arginine 319; these read RSS, NA, and KPTSS.

Belongs to the chorismate synthase family. Homotetramer. FMNH2 is required as a cofactor.

The enzyme catalyses 5-O-(1-carboxyvinyl)-3-phosphoshikimate = chorismate + phosphate. Its pathway is metabolic intermediate biosynthesis; chorismate biosynthesis; chorismate from D-erythrose 4-phosphate and phosphoenolpyruvate: step 7/7. Its function is as follows. Catalyzes the anti-1,4-elimination of the C-3 phosphate and the C-6 proR hydrogen from 5-enolpyruvylshikimate-3-phosphate (EPSP) to yield chorismate, which is the branch point compound that serves as the starting substrate for the three terminal pathways of aromatic amino acid biosynthesis. This reaction introduces a second double bond into the aromatic ring system. This is Chorismate synthase from Alcanivorax borkumensis (strain ATCC 700651 / DSM 11573 / NCIMB 13689 / SK2).